A 102-amino-acid chain; its full sequence is Plastocyanin (102 aa).

The Plastocyanin-like domain occupies 1 to 102 (AKVEVGDEVG…ANMKGTLTVK (102 aa)). Cu cation-binding residues include His-37, Cys-87, His-90, and Met-95.

Belongs to the plastocyanin family. The cofactor is Cu(2+).

It is found in the plastid. It localises to the chloroplast thylakoid membrane. Functionally, participates in electron transfer between P700 and the cytochrome b6-f complex in photosystem I. In Dryopteris crassirhizoma (Thick stemmed wood fern), this protein is Plastocyanin (PETE).